The chain runs to 206 residues: Na(+)-translocating NADH-quinone reductase subunit E (206 aa).

Helical transmembrane passes span 12-32 (AVFVENMALAFFLGMCTFIAI), 36-56 (IQTAIGLGIAVVVVLAITVPV), 85-105 (FLGLLSYIGVIAAIVQILEMT), 118-138 (GIFLPLITVNCAIMGASLFMV), 148-168 (VVYGVGAGVGWALAITLLAGI), and 184-204 (LGITFITVGLMSLGFMSFSGV).

This sequence belongs to the NqrDE/RnfAE family. In terms of assembly, composed of six subunits; NqrA, NqrB, NqrC, NqrD, NqrE and NqrF.

It localises to the cell inner membrane. It catalyses the reaction a ubiquinone + n Na(+)(in) + NADH + H(+) = a ubiquinol + n Na(+)(out) + NAD(+). NQR complex catalyzes the reduction of ubiquinone-1 to ubiquinol by two successive reactions, coupled with the transport of Na(+) ions from the cytoplasm to the periplasm. NqrA to NqrE are probably involved in the second step, the conversion of ubisemiquinone to ubiquinol. The protein is Na(+)-translocating NADH-quinone reductase subunit E of Alcanivorax borkumensis (strain ATCC 700651 / DSM 11573 / NCIMB 13689 / SK2).